A 541-amino-acid polypeptide reads, in one-letter code: T-complex protein 1 subunit epsilon (541 aa).

Ala-2 bears the N-acetylalanine mark. Lys-20 is covalently cross-linked (Glycyl lysine isopeptide (Lys-Gly) (interchain with G-Cter in SUMO2)). Ser-26 carries the post-translational modification Phosphoserine. Position 53 (Gly-53) interacts with ADP. Gly-53 contributes to the ATP binding site. Asp-104 lines the Mg(2+) pocket. Residues Gly-105, Thr-106, Thr-107, and Ser-175 each coordinate ADP. Thr-106 and Thr-107 together coordinate ATP. Glycyl lysine isopeptide (Lys-Gly) (interchain with G-Cter in SUMO2) cross-links involve residues Lys-210, Lys-214, Lys-265, Lys-275, and Lys-279. The residue at position 346 (Ser-346) is a Phosphoserine. Lys-392 is covalently cross-linked (Glycyl lysine isopeptide (Lys-Gly) (interchain with G-Cter in SUMO2)). The ADP site is built by Gly-422, Asp-492, Glu-508, and Lys-513. ATP is bound at residue Gly-422. Phosphoserine is present on Ser-539.

Belongs to the TCP-1 chaperonin family. Component of the chaperonin-containing T-complex (TRiC), a hexadecamer composed of two identical back-to-back stacked rings enclosing a protein folding chamber. Each ring is made up of eight different subunits: TCP1/CCT1, CCT2, CCT3, CCT4, CCT5, CCT6A/CCT6, CCT7, CCT8. Interacts with PACRG. Interacts with DNAAF4. Interacts with DLEC1. Interacts with SPMAP2. Ubiquitinated by the DCX(DCAF12) complex specifically recognizes the diglutamate (Glu-Glu) at the C-terminus, leading to its degradation.

The protein resides in the cytoplasm. It is found in the cytoskeleton. Its subcellular location is the microtubule organizing center. The protein localises to the centrosome. It carries out the reaction ATP + H2O = ADP + phosphate + H(+). Its function is as follows. Component of the chaperonin-containing T-complex (TRiC), a molecular chaperone complex that assists the folding of actin, tubulin and other proteins upon ATP hydrolysis. The TRiC complex mediates the folding of WRAP53/TCAB1, thereby regulating telomere maintenance. As part of the TRiC complex may play a role in the assembly of BBSome, a complex involved in ciliogenesis regulating transports vesicles to the cilia. The polypeptide is T-complex protein 1 subunit epsilon (Cct5) (Rattus norvegicus (Rat)).